The primary structure comprises 492 residues: Catalase isozyme 3 (492 aa).

Catalysis depends on residues His-65 and Asn-138. Tyr-348 serves as a coordination point for heme.

This sequence belongs to the catalase family. As to quaternary structure, homotetramer. Requires heme as cofactor.

Its subcellular location is the peroxisome. The catalysed reaction is 2 H2O2 = O2 + 2 H2O. Its function is as follows. Occurs in almost all aerobically respiring organisms and serves to protect cells from the toxic effects of hydrogen peroxide. This is Catalase isozyme 3 (CAT3) from Nicotiana plumbaginifolia (Leadwort-leaved tobacco).